Here is a 319-residue protein sequence, read N- to C-terminus: Ribosomal RNA small subunit methyltransferase H (319 aa).

Residues 39–41, Asp59, Phe83, Asp104, and Gln111 contribute to the S-adenosyl-L-methionine site; that span reads GGH.

Belongs to the methyltransferase superfamily. RsmH family.

It localises to the cytoplasm. It carries out the reaction cytidine(1402) in 16S rRNA + S-adenosyl-L-methionine = N(4)-methylcytidine(1402) in 16S rRNA + S-adenosyl-L-homocysteine + H(+). Specifically methylates the N4 position of cytidine in position 1402 (C1402) of 16S rRNA. The polypeptide is Ribosomal RNA small subunit methyltransferase H (Ralstonia pickettii (strain 12D)).